The sequence spans 305 residues: Coiled-coil domain-containing protein 83 (305 aa).

Positions 1-25 (MDSSAKGSKKDAPDGPPKDSKLPVS) are disordered. Positions 8–21 (SKKDAPDGPPKDSK) are enriched in basic and acidic residues. Positions 37–186 (ENAVERFMFH…LEDEKKRISR (150 aa)) form a coiled coil.

The chain is Coiled-coil domain-containing protein 83 (Ccdc83) from Mus musculus (Mouse).